Consider the following 160-residue polypeptide: Cyclic pyranopterin monophosphate synthase (160 aa).

Substrate contacts are provided by residues 74–76 (LSH) and 112–113 (ME). Residue aspartate 127 is part of the active site.

Belongs to the MoaC family. In terms of assembly, homohexamer; trimer of dimers.

It catalyses the reaction (8S)-3',8-cyclo-7,8-dihydroguanosine 5'-triphosphate = cyclic pyranopterin phosphate + diphosphate. Its pathway is cofactor biosynthesis; molybdopterin biosynthesis. Its function is as follows. Catalyzes the conversion of (8S)-3',8-cyclo-7,8-dihydroguanosine 5'-triphosphate to cyclic pyranopterin monophosphate (cPMP). The sequence is that of Cyclic pyranopterin monophosphate synthase from Geotalea uraniireducens (strain Rf4) (Geobacter uraniireducens).